A 295-amino-acid chain; its full sequence is Protein NEOXANTHIN-DEFICIENT 1 (295 aa).

The disordered stretch occupies residues 221-251; sequence PAKVSGPSESDADKENSSEDQSSNVESVSRV.

Required for neoxanthin biosynthesis. Probably not involved directly in the enzymatic conversion of violaxanthin to neoxanthin. Is necessary but not sufficient for neoxanthin synthesis. Seems not required for abscisic acid (ABA) biosynthesis in response to drought stress. The sequence is that of Protein NEOXANTHIN-DEFICIENT 1 from Solanum lycopersicum (Tomato).